We begin with the raw amino-acid sequence, 393 residues long: Alpha-pyrone synthesis polyketide synthase-like Pks18 (393 aa).

Residues methionine 1–proline 26 form a disordered region. The active-site Nucleophile is cysteine 175. Histidine 221 is a binding site for substrate.

Belongs to the thiolase-like superfamily. Chalcone/stilbene synthases family. As to quaternary structure, homodimer.

It participates in lipid metabolism; fatty acid biosynthesis. Involved in the biosynthesis of tri- and tetraketide alpha-pyrones. Pks18 catalyzes the extension of medium- and long-chain aliphatic acyl-CoA substrates by using malonyl-CoA as an extender molecule to synthesize polyketide products. This chain is Alpha-pyrone synthesis polyketide synthase-like Pks18 (pks18), found in Mycobacterium bovis (strain ATCC BAA-935 / AF2122/97).